The following is a 405-amino-acid chain: 1-deoxy-D-xylulose 5-phosphate reductoisomerase (405 aa).

8 residues coordinate NADPH: Thr16, Gly17, Ser18, Ile19, Gly42, Arg43, Asn44, and Asn130. Lys131 contributes to the 1-deoxy-D-xylulose 5-phosphate binding site. Glu132 contributes to the NADPH binding site. A Mn(2+)-binding site is contributed by Asp156. 1-deoxy-D-xylulose 5-phosphate-binding residues include Ser157, Glu158, Ser192, and His215. Glu158 lines the Mn(2+) pocket. Gly221 is an NADPH binding site. 1-deoxy-D-xylulose 5-phosphate contacts are provided by Ser228, Asn233, Lys234, and Glu237. Glu237 lines the Mn(2+) pocket.

It belongs to the DXR family. Mg(2+) serves as cofactor. Requires Mn(2+) as cofactor.

It catalyses the reaction 2-C-methyl-D-erythritol 4-phosphate + NADP(+) = 1-deoxy-D-xylulose 5-phosphate + NADPH + H(+). It participates in isoprenoid biosynthesis; isopentenyl diphosphate biosynthesis via DXP pathway; isopentenyl diphosphate from 1-deoxy-D-xylulose 5-phosphate: step 1/6. Its function is as follows. Catalyzes the NADPH-dependent rearrangement and reduction of 1-deoxy-D-xylulose-5-phosphate (DXP) to 2-C-methyl-D-erythritol 4-phosphate (MEP). The chain is 1-deoxy-D-xylulose 5-phosphate reductoisomerase from Pasteurella multocida (strain Pm70).